The primary structure comprises 230 residues: uncharacterized protein (230 aa).

The interval 118 to 195 is disordered; the sequence is LLDEILPKEP…SKREMERLER (78 aa). A compositionally biased stretch (basic residues) spans 136-146; the sequence is QKKKEKRAALK. 2 stretches are compositionally biased toward basic and acidic residues: residues 160-170 and 179-195; these read ETDLYGDRDSF and QRSE…RLER.

This is an uncharacterized protein from Schizosaccharomyces pombe (strain 972 / ATCC 24843) (Fission yeast).